The chain runs to 144 residues: uncharacterized protein (144 aa).

N-linked (GlcNAc...) asparagine glycans are attached at residues Asn-14 and Asn-15. A helical membrane pass occupies residues 90–110 (FSWFIFGLFIACLLLCITLVL). The interval 120–144 (NKATEVVPSSNIDDEEKQLSLSDMI) is disordered.

Its subcellular location is the membrane. This is an uncharacterized protein from Saccharomyces cerevisiae (strain ATCC 204508 / S288c) (Baker's yeast).